Consider the following 746-residue polypeptide: Iron-sulfur clusters transporter ABCB7, mitochondrial (746 aa).

Residues 1 to 19 (MAPMLVSLNCGIRVQRRTL) constitute a mitochondrion transit peptide. At 20-133 (TLLIRQTSSY…KDRPDLRARV (114 aa)) the chain is on the mitochondrial matrix side. The ABC transmembrane type-1 domain occupies 133–429 (VAVSLGLLAG…LGTVYRETRQ (297 aa)). Residues 134–154 (AVSLGLLAGAKLTNVMVPFMF) form a helical membrane-spanning segment. Residues 155-176 (KYAVDELNQMSGHMLNLNDAPS) lie on the Mitochondrial intermembrane side of the membrane. A helical membrane pass occupies residues 177-199 (TVATMTTAVLIGYGVSRAGSALF). Residues 200-252 (NELRNTVFGKVAQSSIRRIAKNVFLHLHNLDLGFHLSRQTGALSKAIDRGTRG) lie on the Mitochondrial matrix side of the membrane. The helical transmembrane segment at 253–273 (ISFVLSALVFNLGPTVFEMFL) threads the bilayer. The Mitochondrial intermembrane segment spans residues 274-283 (VSAILYYKCG). Residues 284 to 304 (GEFAAVALGTLSAYTIFTILV) traverse the membrane as a helical segment. Topologically, residues 305-375 (TQWRTRFRIE…TLAMLNFGQS (71 aa)) are mitochondrial matrix. Glutathione contacts are provided by residues 308–312 (RTRFR) and 371–374 (NFGQ). Residues 376 to 396 (AIFSVGLTAIMLLASKGIAAG) traverse the membrane as a helical segment. At 397–402 (NMTVGD) the chain is on the mitochondrial intermembrane side. Residues 403–423 (LVMVNGLLFQLSLPLNFLGTV) form a helical membrane-spanning segment. Glycine 421 is a glutathione binding site. Residues 424–746 (YRETRQALID…SVKGCGNCSC (323 aa)) lie on the Mitochondrial matrix side of the membrane. In terms of domain architecture, ABC transporter spans 465–699 (IRFEDVYFEY…PGSLYAELWN (235 aa)). ATP is bound by residues tyrosine 474 and 498–505 (GGSGSGKS). The disordered stretch occupies residues 708–728 (SRKSSSAPAAERLSQKEEERK).

Belongs to the ABC transporter superfamily. ABCB family. Heavy Metal importer (TC 3.A.1.210) subfamily. In terms of assembly, homodimer.

The protein localises to the mitochondrion inner membrane. The protein resides in the mitochondrion. It catalyses the reaction (glutathione)4[2Fe(III)-2S] cluster(in) + ATP + H2O = (glutathione)4[2Fe(III)-2S] cluster(out) + ADP + phosphate + H(+). Exports glutathione-coordinated iron-sulfur clusters such as [2Fe-2S]-(GS)4 cluster from the mitochondria to the cytosol in an ATP-dependent manner allowing the assembly of the cytosolic iron-sulfur (Fe/S) cluster-containing proteins and participates in iron homeostasis. May play a role in iron and lipid metabolism. The polypeptide is Iron-sulfur clusters transporter ABCB7, mitochondrial (Oryzias latipes (Japanese rice fish)).